We begin with the raw amino-acid sequence, 470 residues long: Nucleoporin NUP49 (470 aa).

The span at 1 to 13 (MSLFGTNTTSQTP) shows a compositional bias: polar residues. The disordered stretch occupies residues 1–92 (MSLFGTNTTS…STTTTTSQPQ (92 aa)). 12 GLFG repeats span residues 17 to 20 (GLFG), 45 to 48 (GLFG), 63 to 66 (GLFG), 79 to 82 (GLFG), 96 to 99 (GLFG), 111 to 114 (GLFG), 127 to 130 (GLFG), 142 to 145 (GLFG), 156 to 159 (GLFG), 168 to 171 (GLFG), 181 to 184 (GLFG), and 193 to 197 (GLFGQ). Low complexity predominate over residues 20-31 (GTTTSQSAQTGS). Over residues 32-74 (LFGTATSQPQQTGGLFGSTATQTPSSQLQSTGLFGSTTATSQP) the composition is skewed to polar residues. Over residues 75–92 (QQTGGLFGSTTTTTSQPQ) the composition is skewed to low complexity. The interval 196–221 (GQSTTQPQQQQNATPGLTMGQSTNTQ) is disordered. Positions 197-206 (QSTTQPQQQQ) are enriched in low complexity. Over residues 207–221 (NATPGLTMGQSTNTQ) the composition is skewed to polar residues. Coiled coils occupy residues 239–270 (TRFN…EAVD) and 375–401 (FSKT…AHLT).

Belongs to the nucleoporin GLFG family. Component of the nuclear pore complex (NPC). NPC constitutes the exclusive means of nucleocytoplasmic transport. NPCs allow the passive diffusion of ions and small molecules and the active, nuclear transport receptor-mediated bidirectional transport of macromolecules such as proteins, RNAs, ribonucleoparticles (RNPs), and ribosomal subunits across the nuclear envelope. Due to its 8-fold rotational symmetry, all subunits are present with 8 copies or multiples thereof.

It is found in the nucleus. Its subcellular location is the nuclear pore complex. The protein resides in the nucleus membrane. Its function is as follows. Functions as a component of the nuclear pore complex (NPC). NPC components, collectively referred to as nucleoporins (NUPs), can play the role of both NPC structural components and of docking or interaction partners for transiently associated nuclear transport factors. Active directional transport is assured by both, a Phe-Gly (FG) repeat affinity gradient for these transport factors across the NPC and a transport cofactor concentration gradient across the nuclear envelope (GSP1 and GSP2 GTPases associated predominantly with GTP in the nucleus, with GDP in the cytoplasm). NUP49 plays an important role in several nuclear transport pathways including poly(A)+ RNA, tRNA, and pre-ribosome transport. In Chaetomium thermophilum (strain DSM 1495 / CBS 144.50 / IMI 039719) (Thermochaetoides thermophila), this protein is Nucleoporin NUP49 (NUP49).